The primary structure comprises 1163 residues: DNA-directed RNA polymerase subunit beta 2 (1163 aa).

The protein belongs to the RNA polymerase beta chain family. As to quaternary structure, the RNAP catalytic core consists of 2 alpha, 1 beta, 1 beta' and 1 omega subunit. When a sigma factor is associated with the core the holoenzyme is formed, which can initiate transcription.

The catalysed reaction is RNA(n) + a ribonucleoside 5'-triphosphate = RNA(n+1) + diphosphate. In terms of biological role, DNA-dependent RNA polymerase catalyzes the transcription of DNA into RNA using the four ribonucleoside triphosphates as substrates. The protein is DNA-directed RNA polymerase subunit beta 2 of Nocardia farcinica (strain IFM 10152).